The chain runs to 343 residues: Palmitoyltransferase ZDHHC4 (343 aa).

The Lumenal portion of the chain corresponds to 1 to 2; the sequence is MD. The chain crosses the membrane as a helical span at residues 3-23; the sequence is FLVLFSFYLAFLLICVIMICI. Residues 24 to 67 are Cytoplasmic-facing; it reads FTKSQRLKAVVLGGAQVCARVTPQCFQRAVQTLLHQLFHTRHPA. The helical transmembrane segment at 68–88 threads the bilayer; that stretch reads FLALHLLLQGLVYAEYTYEVF. The Lumenal segment spans residues 89–95; sequence SYCRELE. A helical transmembrane segment spans residues 96 to 116; it reads FSLPCLLLPYVLLSVNLVFFT. Topologically, residues 117–193 are cytoplasmic; that stretch reads LTCSTNPGTI…NCIGAWNTGY (77 aa). Residues 149–199 enclose the DHHC domain; the sequence is SRCSTCDLRKPARSKHCRVCDRCVHRFDHHCVWVNNCIGAWNTGYFLIYLL. The active-site S-palmitoyl cysteine intermediate is the C179. The helical transmembrane segment at 194-214 threads the bilayer; that stretch reads FLIYLLTLTASAATIAILSAA. Over 215–255 the chain is Lumenal; the sequence is FLLRLVAVSNLYQETYLDDLGRFQAVDTGFLIQHLFLAFPR. The helical transmembrane segment at 256-276 threads the bilayer; the sequence is IIFLLGFVIVLSLLLAGYLCF. The Cytoplasmic segment spans residues 277 to 343; that stretch reads ALYLAATNQT…ATPSYKKKKR (67 aa). Positions 340–343 match the Di-lysine motif motif; sequence KKKR.

Belongs to the DHHC palmitoyltransferase family. Interacts with CPT1A.

The protein localises to the endoplasmic reticulum membrane. Its subcellular location is the golgi apparatus membrane. It is found in the cell membrane. It carries out the reaction L-cysteinyl-[protein] + hexadecanoyl-CoA = S-hexadecanoyl-L-cysteinyl-[protein] + CoA. In terms of biological role, palmitoyltransferase that could catalyze the addition of palmitate onto protein substrates including the D(2) dopamine receptor DRD2, GSK3B or MAVS. Mediates GSK3B palmitoylation to prevent its AKT1-mediated phosphorylation leading to activation of the STAT3 signaling pathway. Also catalyzes MAVS palmitoylation which promotes its stabilization and activation by inhibiting 'Lys-48'- but facilitating 'Lys-63'-linked ubiquitination. This Rattus norvegicus (Rat) protein is Palmitoyltransferase ZDHHC4.